Here is an 81-residue protein sequence, read N- to C-terminus: MKQNIHPNYQPVVFMDTTTGFKFLTGSTKGSKETVEWEDGNTYPLIRVEISSDSHPFYTGRQKFQAADGRIARFEKKYGKQ.

Belongs to the bacterial ribosomal protein bL31 family. Type B subfamily. In terms of assembly, part of the 50S ribosomal subunit.

The protein is Large ribosomal subunit protein bL31B of Lactococcus lactis subsp. lactis (strain IL1403) (Streptococcus lactis).